The primary structure comprises 516 residues: MSSSSYNTSVIPSSSSSAQPFFITSSGTGDNDFNRKDTFMSMIQQPNSSAPPPKKRRNQPGNPNPDAEVVALSPKTLMATNRFICDVCNKGFQREQNLQLHRRGHNLPWKLKQKSTKEVKRKVYLCPEPTCVHHDPSRALGDLTGIKKHYYRKHGEKKWKCEKCSKRYAVQSDWKAHSKTCGTKEYRCDCGTIFSRRDSYITHRAFCDALIQETARNPTVSFTSMTAASSGVGSGGIYGRLGGGSALSHHHLSDHPNFGFNPLVGYNLNIASSDNRRDFIPQSSNPNFLIQSASSQGMLNTTPNNNNQSFMNQHGLIQFDPVDNINLKSSGTNNSFFNLGFFQENTKNSETSLPSLYSTDVLVHHREENLNAGSNVSATALLQKATQMGSVTSNDPSALFRGLASSSNSSSVIANHFGGGRIMENDNNGNLQGLMNSLAAVNGGGGSGGSIFDVQFGDNGNMSGSDKLTLDFLGVGGMVRNVNRGGGGGGRGSARGGVSLDGEAKFPEQNYPFGRG.

Low complexity predominate over residues 1–26 (MSSSSYNTSVIPSSSSSAQPFFITSS). The interval 1-68 (MSSSSYNTSV…QPGNPNPDAE (68 aa)) is disordered. The transit peptide at 1–70 (MSSSSYNTSV…GNPNPDAEVV (70 aa)) directs the protein to the chloroplast. Ser73 is subject to Phosphoserine. 2 C2H2-type zinc fingers span residues 83–105 (FICD…RRGH) and 124–154 (YLCP…YRKH). The Nuclear localization signal signature appears at 146-153 (IKKHYYRK). Residues 159–182 (WKCEKCSKRYAVQSDWKAHSKTCG) form a C2H2-type 2; degenerate zinc finger. Cys161, Cys164, His177, Cys181, Cys188, Cys190, His203, and Cys207 together coordinate Zn(2+). The CCHC-type 2; atypical zinc finger occupies 186 to 209 (YRCDCGTIFSRRDSYITHRAFCDA). Residues 196–208 (RRDSYITHRAFCD) form an SHR-binding region. The disordered stretch occupies residues 483–516 (NRGGGGGGRGSARGGVSLDGEAKFPEQNYPFGRG). Over residues 484-495 (RGGGGGGRGSAR) the composition is skewed to gly residues.

As to quaternary structure, binds to RGA and SCL3 competitively in the nucleus.

The protein localises to the plastid. Its subcellular location is the chloroplast. The protein resides in the nucleus. In terms of biological role, transcription factor that may act a transcriptional activator of nuclear-encoded photosynthetic gene expression. Binds DNA via its zinc fingers. Recognizes and binds to SCL3 promoter sequence 5'-AGACAA-3' to promote its expression when in complex with RGA. This Arabidopsis thaliana (Mouse-ear cress) protein is Protein indeterminate-domain 4, chloroplastic.